The following is a 154-amino-acid chain: NADPH-dependent 7-cyano-7-deazaguanine reductase (154 aa).

Catalysis depends on Cys52, which acts as the Thioimide intermediate. Asp59 acts as the Proton donor in catalysis. Substrate-binding positions include 74–76 (VES) and 93–94 (HE).

It belongs to the GTP cyclohydrolase I family. QueF type 1 subfamily.

It localises to the cytoplasm. The catalysed reaction is 7-aminomethyl-7-carbaguanine + 2 NADP(+) = 7-cyano-7-deazaguanine + 2 NADPH + 3 H(+). Its pathway is tRNA modification; tRNA-queuosine biosynthesis. In terms of biological role, catalyzes the NADPH-dependent reduction of 7-cyano-7-deazaguanine (preQ0) to 7-aminomethyl-7-deazaguanine (preQ1). The polypeptide is NADPH-dependent 7-cyano-7-deazaguanine reductase (Paracoccus denitrificans (strain Pd 1222)).